The sequence spans 316 residues: Pantothenate kinase (316 aa).

ATP is bound at residue 95-102; sequence GSVAVGKS.

It belongs to the prokaryotic pantothenate kinase family.

Its subcellular location is the cytoplasm. The enzyme catalyses (R)-pantothenate + ATP = (R)-4'-phosphopantothenate + ADP + H(+). Its pathway is cofactor biosynthesis; coenzyme A biosynthesis; CoA from (R)-pantothenate: step 1/5. This chain is Pantothenate kinase, found in Shewanella halifaxensis (strain HAW-EB4).